The primary structure comprises 461 residues: RCC1-like G exchanging factor-like protein (461 aa).

A compositionally biased stretch (low complexity) spans 1–10 (MLAAARALRG). The transit peptide at 1 to 34 (MLAAARALRGPRPRWPTPAREHWTPAGRSRSRRE) directs the protein to the mitochondrion. Residues 1–35 (MLAAARALRGPRPRWPTPAREHWTPAGRSRSRREA) are disordered. RCC1 repeat units follow at residues 55-121 (ADRV…LSSK), 125-188 (VTKV…VLTD), 190-244 (EGVF…FLTD), 245-297 (KGEV…ALSA), 298-350 (DGGV…VLNA), 352-408 (GHVF…ALTN), and 409-458 (KGEL…TLAK).

In terms of assembly, forms a regulatory protein-RNA complex, consisting of RCC1L, NGRN, RPUSD3, RPUSD4, TRUB2, FASTKD2 and 16S mt-rRNA. Interacts with 16S mt-rRNA; this interaction is direct. Interacts with OPA1; this interaction is direct. As to expression, at E8.5, broadly expressed in yolk sac placenta, decidua, and embryo, with highest levels found in the trophoblast giant cells (TGCs) and ectoplacental cone (at protein level).

Its subcellular location is the mitochondrion inner membrane. In terms of biological role, guanine nucleotide exchange factor (GEF) for mitochondrial dynamin-related GTPase OPA1. Activates OPA1, by exchanging bound GDP for free GTP, and drives OPA1 and MFN1-dependent mitochondrial fusion. Plays an essential role in mitochondrial ribosome biogenesis. As a component of a functional protein-RNA module, consisting of RCC1L, NGRN, RPUSD3, RPUSD4, TRUB2, FASTKD2 and 16S mitochondrial ribosomal RNA (16S mt-rRNA), controls 16S mt-rRNA abundance and is required for intra-mitochondrial translation of core subunits of the oxidative phosphorylation system. This chain is RCC1-like G exchanging factor-like protein, found in Mus musculus (Mouse).